The sequence spans 1755 residues: Transposon Ty1-LR2 Gag-Pol polyprotein (1755 aa).

Composition is skewed to polar residues over residues 1–23 (MESQQLSQHSPISHGSACASVTS), 48–60 (TKANSQQTTTPAS), and 127–152 (QSQFPQYPSSVGTPLSTPSPESGNTF). Disordered stretches follow at residues 1–93 (MESQ…MMTQ), 126–174 (PQSQ…PPPM), and 352–421 (GSRN…SKST). A compositionally biased stretch (low complexity) spans 153 to 165 (TDSSSADSDMTST). Residues 299-401 (NNGIHINNKV…NSKSKTARAH (103 aa)) form an RNA-binding region. Positions 402–418 (NVSTSNNSPSTDNDSIS) are enriched in low complexity. At S416 the chain carries Phosphoserine. D461 serves as the catalytic For protease activity; shared with dimeric partner. An integrase-type zinc finger-like region spans residues 583 to 640 (NVHTSESTRKYPYPFIHRMLAHANAPTIRYSLKNNTITYFNESDVDWSSAIDYQCPDC). The region spanning 660–835 (NSYEPFQYLH…AGLDISTLLP (176 aa)) is the Integrase catalytic domain. Residues D671 and D736 each coordinate Mg(2+). 3 disordered regions span residues 956–1087 (SKAV…ETEK), 1092–1111 (RSPSIDASPPENNSSHNIVP), and 1130–1187 (DLPL…DNET). Low complexity predominate over residues 960–969 (SPTDSTPPST). A compositionally biased stretch (polar residues) spans 1005–1015 (STPQISNIEST). Basic and acidic residues predominate over residues 1038 to 1053 (ESSHASKSKDFRHSDS). 2 stretches are compositionally biased toward polar residues: residues 1054–1082 (YSENETNHTNVPISSTGGTNNKTVPQISD) and 1101–1111 (PENNSSHNIVP). The Bipartite nuclear localization signal motif lies at 1178 to 1212 (KKRSLEDNETEIKVSRDTWNTKNMRSLEPPRSKKR). The 139-residue stretch at 1338 to 1476 (NNYYITQLDI…DILGLEIKYQ (139 aa)) folds into the Reverse transcriptase Ty1/copia-type domain. Mg(2+) contacts are provided by D1346, D1427, D1428, D1610, E1652, and D1685. In terms of domain architecture, RNase H Ty1/copia-type spans 1610-1752 (DASYGNQPYY…IKTFKLLTNK (143 aa)).

In terms of assembly, the capsid protein forms a homotrimer, from which the VLPs are assembled. The protease is a homodimer, whose active site consists of two apposed aspartic acid residues. Post-translationally, initially, virus-like particles (VLPs) are composed of the structural unprocessed proteins Gag and Gag-Pol, and also contain the host initiator methionine tRNA (tRNA(i)-Met) which serves as a primer for minus-strand DNA synthesis, and a dimer of genomic Ty RNA. Processing of the polyproteins occurs within the particle and proceeds by an ordered pathway, called maturation. First, the protease (PR) is released by autocatalytic cleavage of the Gag-Pol polyprotein yielding capsid protein p45 and a Pol-p154 precursor protein. This cleavage is a prerequisite for subsequent processing of Pol-p154 at the remaining sites to release the mature structural and catalytic proteins. Maturation takes place prior to the RT reaction and is required to produce transposition-competent VLPs.

It localises to the cytoplasm. The protein localises to the nucleus. It catalyses the reaction DNA(n) + a 2'-deoxyribonucleoside 5'-triphosphate = DNA(n+1) + diphosphate. The catalysed reaction is Endonucleolytic cleavage to 5'-phosphomonoester.. Functionally, capsid protein (CA) is the structural component of the virus-like particle (VLP), forming the shell that encapsulates the retrotransposons dimeric RNA genome. The particles are assembled from trimer-clustered units and there are holes in the capsid shells that allow for the diffusion of macromolecules. CA also has nucleocapsid-like chaperone activity, promoting primer tRNA(i)-Met annealing to the multipartite primer-binding site (PBS), dimerization of Ty1 RNA and initiation of reverse transcription. In terms of biological role, the aspartyl protease (PR) mediates the proteolytic cleavages of the Gag and Gag-Pol polyproteins after assembly of the VLP. Reverse transcriptase/ribonuclease H (RT) is a multifunctional enzyme that catalyzes the conversion of the retro-elements RNA genome into dsDNA within the VLP. The enzyme displays a DNA polymerase activity that can copy either DNA or RNA templates, and a ribonuclease H (RNase H) activity that cleaves the RNA strand of RNA-DNA heteroduplexes during plus-strand synthesis and hydrolyzes RNA primers. The conversion leads to a linear dsDNA copy of the retrotransposon that includes long terminal repeats (LTRs) at both ends. Its function is as follows. Integrase (IN) targets the VLP to the nucleus, where a subparticle preintegration complex (PIC) containing at least integrase and the newly synthesized dsDNA copy of the retrotransposon must transit the nuclear membrane. Once in the nucleus, integrase performs the integration of the dsDNA into the host genome. The protein is Transposon Ty1-LR2 Gag-Pol polyprotein (TY1B-LR2) of Saccharomyces cerevisiae (strain ATCC 204508 / S288c) (Baker's yeast).